A 378-amino-acid polypeptide reads, in one-letter code: GTP 3',8-cyclase 3 (378 aa).

The Radical SAM core domain occupies 40–259 (RCGRTMGDLR…STLGKKYGPI (220 aa)). A GTP-binding site is contributed by arginine 49. Residues cysteine 56 and cysteine 60 each coordinate [4Fe-4S] cluster. Tyrosine 62 provides a ligand contact to S-adenosyl-L-methionine. Position 63 (cysteine 63) interacts with [4Fe-4S] cluster. A GTP-binding site is contributed by arginine 99. Glycine 103 is an S-adenosyl-L-methionine binding site. Threonine 134 contributes to the GTP binding site. Residue serine 158 participates in S-adenosyl-L-methionine binding. Lysine 195 contacts GTP. Methionine 229 contributes to the S-adenosyl-L-methionine binding site. [4Fe-4S] cluster is bound by residues cysteine 292 and cysteine 295. Residue 297 to 299 (RSR) coordinates GTP. Residue cysteine 309 participates in [4Fe-4S] cluster binding.

This sequence belongs to the radical SAM superfamily. MoaA family. Monomer and homodimer. [4Fe-4S] cluster serves as cofactor.

It catalyses the reaction GTP + AH2 + S-adenosyl-L-methionine = (8S)-3',8-cyclo-7,8-dihydroguanosine 5'-triphosphate + 5'-deoxyadenosine + L-methionine + A + H(+). Its pathway is cofactor biosynthesis; molybdopterin biosynthesis. Its function is as follows. Catalyzes the cyclization of GTP to (8S)-3',8-cyclo-7,8-dihydroguanosine 5'-triphosphate. This Mycobacterium bovis (strain ATCC BAA-935 / AF2122/97) protein is GTP 3',8-cyclase 3.